The following is a 134-amino-acid chain: uncharacterized protein (134 aa).

This is an uncharacterized protein from Streptomyces coelicolor (strain ATCC BAA-471 / A3(2) / M145).